A 606-amino-acid chain; its full sequence is KH domain-containing protein At4g18375 (606 aa).

Positions 1–10 (MVERKKRKQI) are enriched in basic residues. The segment at 1–26 (MVERKKRKQIQRNNSESNRNQKRRIS) is disordered. 5 consecutive KH domains span residues 35-99 (LVVY…IGFT), 138-210 (NKEC…LFAV), 311-380 (ELVF…VEAV), 394-455 (NVKM…LIQI), and 535-599 (SSAL…ENLV).

Its subcellular location is the nucleus. The protein is KH domain-containing protein At4g18375 of Arabidopsis thaliana (Mouse-ear cress).